Reading from the N-terminus, the 138-residue chain is Large ribosomal subunit protein uL16 (138 aa).

The segment covering M1–Q13 has biased composition (basic residues). Positions M1 to V20 are disordered.

This sequence belongs to the universal ribosomal protein uL16 family. As to quaternary structure, part of the 50S ribosomal subunit.

Binds 23S rRNA and is also seen to make contacts with the A and possibly P site tRNAs. The protein is Large ribosomal subunit protein uL16 of Verminephrobacter eiseniae (strain EF01-2).